A 215-amino-acid chain; its full sequence is MSSINIALDGPAAAGKSTIAKRVASRLSMIYVDTGAMYRAITYKYLQNGKPENFDYLINNTKLELTYDEVKGQRILLDNQDVTDYLRENDVTHHVSYVASKEPVRSFAVKIQKELAAKKGIVMDGRDIGTVVLPDAELKVYMIASVAERAERRQKENEQRGIESNLEQLKEEIEARDHYDMNREISPLQKAEDAITLDTTGKSIEEVTNEILSLL.

10-18 (GPAAAGKST) is an ATP binding site.

It belongs to the cytidylate kinase family. Type 1 subfamily.

It is found in the cytoplasm. The catalysed reaction is CMP + ATP = CDP + ADP. The enzyme catalyses dCMP + ATP = dCDP + ADP. This Staphylococcus epidermidis (strain ATCC 35984 / DSM 28319 / BCRC 17069 / CCUG 31568 / BM 3577 / RP62A) protein is Cytidylate kinase.